Consider the following 631-residue polypeptide: Phosphomethylpyrimidine synthase (631 aa).

Substrate-binding positions include Asn239, Met268, Tyr297, His333, 353 to 355, 394 to 397, and Glu433; these read SRG and DGLR. His437 serves as a coordination point for Zn(2+). Residue Tyr460 coordinates substrate. His501 is a Zn(2+) binding site. [4Fe-4S] cluster contacts are provided by Cys581, Cys584, and Cys589.

Belongs to the ThiC family. As to quaternary structure, homodimer. [4Fe-4S] cluster is required as a cofactor.

The catalysed reaction is 5-amino-1-(5-phospho-beta-D-ribosyl)imidazole + S-adenosyl-L-methionine = 4-amino-2-methyl-5-(phosphooxymethyl)pyrimidine + CO + 5'-deoxyadenosine + formate + L-methionine + 3 H(+). Its pathway is cofactor biosynthesis; thiamine diphosphate biosynthesis. Its function is as follows. Catalyzes the synthesis of the hydroxymethylpyrimidine phosphate (HMP-P) moiety of thiamine from aminoimidazole ribotide (AIR) in a radical S-adenosyl-L-methionine (SAM)-dependent reaction. The protein is Phosphomethylpyrimidine synthase of Salmonella paratyphi C (strain RKS4594).